The primary structure comprises 465 residues: Lactaldehyde dehydrogenase (465 aa).

220–225 (GSVEVG) is a binding site for NAD(+). Residues E240 and C274 contribute to the active site.

This sequence belongs to the aldehyde dehydrogenase family. Homotetramer.

It carries out the reaction (S)-lactaldehyde + NAD(+) + H2O = (S)-lactate + NADH + 2 H(+). It participates in cofactor biosynthesis; coenzyme F420 biosynthesis. In terms of biological role, involved in F420 biosynthesis through the oxidation of lactaldehyde to lactate. This chain is Lactaldehyde dehydrogenase, found in Methanococcus maripaludis (strain DSM 14266 / JCM 13030 / NBRC 101832 / S2 / LL).